Here is a 132-residue protein sequence, read N- to C-terminus: Small ribosomal subunit protein uS9 (132 aa).

Belongs to the universal ribosomal protein uS9 family.

This Blochmanniella pennsylvanica (strain BPEN) protein is Small ribosomal subunit protein uS9.